The following is a 91-amino-acid chain: N(2)-fixation sustaining protein CowN (91 aa).

The protein belongs to the CowN family.

Is required to sustain N(2)-dependent growth in the presence of low levels of carbon monoxide (CO). Probably acts by protecting the N(2) fixation ability of the nitrogenase complex, which is inactivated in the presence of CO. The sequence is that of N(2)-fixation sustaining protein CowN from Gluconacetobacter diazotrophicus (strain ATCC 49037 / DSM 5601 / CCUG 37298 / CIP 103539 / LMG 7603 / PAl5).